Consider the following 947-residue polypeptide: Bifunctional glutamine synthetase adenylyltransferase/adenylyl-removing enzyme (947 aa).

An adenylyl removase region spans residues 1-440 (MTPLSSPLSQ…VFNELIGDDE (440 aa)). An adenylyl transferase region spans residues 450-947 (SEPWREVWQD…ASWRKWLVAV (498 aa)).

This sequence belongs to the GlnE family. The cofactor is Mg(2+).

The enzyme catalyses [glutamine synthetase]-O(4)-(5'-adenylyl)-L-tyrosine + phosphate = [glutamine synthetase]-L-tyrosine + ADP. It catalyses the reaction [glutamine synthetase]-L-tyrosine + ATP = [glutamine synthetase]-O(4)-(5'-adenylyl)-L-tyrosine + diphosphate. Involved in the regulation of glutamine synthetase GlnA, a key enzyme in the process to assimilate ammonia. When cellular nitrogen levels are high, the C-terminal adenylyl transferase (AT) inactivates GlnA by covalent transfer of an adenylyl group from ATP to specific tyrosine residue of GlnA, thus reducing its activity. Conversely, when nitrogen levels are low, the N-terminal adenylyl removase (AR) activates GlnA by removing the adenylyl group by phosphorolysis, increasing its activity. The regulatory region of GlnE binds the signal transduction protein PII (GlnB) which indicates the nitrogen status of the cell. This is Bifunctional glutamine synthetase adenylyltransferase/adenylyl-removing enzyme from Salmonella schwarzengrund (strain CVM19633).